A 1170-amino-acid chain; its full sequence is Cellulose synthase-like protein D2 (1170 aa).

Disordered regions lie at residues 1–75 and 269–295; these read MASN…PESG and NEVD…EFTS. Positions 10-24 are enriched in low complexity; the sequence is RHSNSSRLSRMSYSG. Residues 273–288 show a composition bias toward gly residues; sequence NGGGGGGGGGLGGGDG. 2 consecutive transmembrane segments (helical) span residues 311-331 and 341-361; these read VLSP…LFLA and AMWL…SWLL. D441 is a catalytic residue. Residues 527 to 551 are a coiled coil; the sequence is HAREEIKAMKRQREAALDDVVEAVK. Residue D873 is part of the active site. The next 6 helical transmembrane spans lie at 955–975, 981–1001, 1027–1047, 1070–1090, 1104–1124, and 1134–1154; these read IFLI…QFIV, TFLT…VLEI, LAAV…SFTL, SLMI…AVGF, LLGG…FAKG, and TIVF…WVAI.

This sequence belongs to the glycosyltransferase 2 family. Plant cellulose synthase-like D subfamily.

Its subcellular location is the golgi apparatus membrane. In terms of biological role, thought to be a Golgi-localized beta-glycan synthase that polymerize the backbones of noncellulosic polysaccharides (hemicelluloses) of plant cell wall. This chain is Cellulose synthase-like protein D2 (CSLD2), found in Oryza sativa subsp. indica (Rice).